Consider the following 389-residue polypeptide: Aromatic-amino-acid aminotransferase 2 (389 aa).

Lys-233 is subject to N6-(pyridoxal phosphate)lysine.

It belongs to the class-I pyridoxal-phosphate-dependent aminotransferase family. Homodimer. Pyridoxal 5'-phosphate serves as cofactor.

The enzyme catalyses an aromatic L-alpha-amino acid + 2-oxoglutarate = an aromatic oxo-acid + L-glutamate. Its function is as follows. Catalyzes the transamination of phenylalanine, tyrosine and tryptophan. Shows virtually no activity towards aspartic acid, alanine, valine or isoleucine. This Thermococcus litoralis (strain ATCC 51850 / DSM 5473 / JCM 8560 / NS-C) protein is Aromatic-amino-acid aminotransferase 2.